Here is a 378-residue protein sequence, read N- to C-terminus: O-glycoside alpha-1,2-mannosyltransferase homolog 3 (378 aa).

The Cytoplasmic segment spans residues 1–6; it reads MGIPKS. The helical; Signal-anchor for type II membrane protein transmembrane segment at 7-24 threads the bilayer; the sequence is SIYFCILLFCIISFYLQS. Over 25-378 the chain is Lumenal; that stretch reads SKDGPKELKV…AIKWLENINS (354 aa). The active-site Nucleophile is Glu-276.

It belongs to the glycosyltransferase 15 family.

Its subcellular location is the endoplasmic reticulum membrane. The protein localises to the golgi apparatus membrane. Functionally, probable mannosyltransferase involved in O-glycosylation of cell wall and secreted proteins. The protein is O-glycoside alpha-1,2-mannosyltransferase homolog 3 (omh3) of Schizosaccharomyces pombe (strain 972 / ATCC 24843) (Fission yeast).